A 444-amino-acid polypeptide reads, in one-letter code: Acyl-CoA (8-3)-desaturase (444 aa).

Methionine 1 is modified (N-acetylmethionine). Residues methionine 1 to glutamine 121 lie on the Cytoplasmic side of the membrane. Residues proline 17–serine 94 form the Cytochrome b5 heme-binding domain. The helical transmembrane segment at methionine 122–leucine 142 threads the bilayer. Topologically, residues aspartate 143–alanine 146 are lumenal. A helical membrane pass occupies residues tryptophan 147–leucine 167. Residues threonine 168–phenylalanine 267 are Cytoplasmic-facing. Residues histidine 179–histidine 183 carry the Histidine box-1 motif. Positions histidine 216–histidine 220 match the Histidine box-2 motif. Residues leucine 268–isoleucine 288 form a helical membrane-spanning segment. At glutamine 289–arginine 305 the chain is on the lumenal side. The helical transmembrane segment at leucine 306–valine 326 threads the bilayer. The Cytoplasmic portion of the chain corresponds to arginine 327–glutamine 444. The short motif at glutamine 382 to histidine 386 is the Histidine box-3 element.

Belongs to the fatty acid desaturase type 1 family. Widely expressed. Expressed in brain, liver and thymus (at protein level). Isoform 1 seems to be more abundant than isoform 2. Expression of isoform 2 is very low in spleen and not detectable in skeletal muscle.

It is found in the endoplasmic reticulum membrane. Its subcellular location is the mitochondrion. The enzyme catalyses (8Z,11Z,14Z)-eicosatrienoyl-CoA + 2 Fe(II)-[cytochrome b5] + O2 + 2 H(+) = (5Z,8Z,11Z,14Z)-eicosatetraenoyl-CoA + 2 Fe(III)-[cytochrome b5] + 2 H2O. It carries out the reaction (8Z,11Z,14Z,17Z)-eicosatetraenoyl-CoA + 2 Fe(II)-[cytochrome b5] + O2 + 2 H(+) = (5Z,8Z,11Z,14Z,17Z)-eicosapentaenoyl-CoA + 2 Fe(III)-[cytochrome b5] + 2 H2O. The catalysed reaction is (11E)-octadecenoyl-CoA + 2 Fe(II)-[cytochrome b5] + O2 + 2 H(+) = (5Z,11E)-octadecadienoyl-CoA + 2 Fe(III)-[cytochrome b5] + 2 H2O. Its pathway is lipid metabolism; polyunsaturated fatty acid biosynthesis. Its function is as follows. Acts as a front-end fatty acyl-coenzyme A (CoA) desaturase that introduces a cis double bond at carbon 5 located between a preexisting double bond and the carboxyl end of the fatty acyl chain. Involved in biosynthesis of highly unsaturated fatty acids (HUFA) from the essential polyunsaturated fatty acids (PUFA) linoleic acid (LA) (18:2n-6) and alpha-linolenic acid (ALA) (18:3n-3) precursors. Specifically, desaturates dihomo-gamma-linoleoate (DGLA) (20:3n-6) and eicosatetraenoate (ETA) (20:4n-3) to generate arachidonate (AA) (20:4n-6) and eicosapentaenoate (EPA) (20:5n-3), respectively. As a rate limiting enzyme for DGLA (20:3n-6) and AA (20:4n-6)-derived eicosanoid biosynthesis, controls the metabolism of inflammatory lipids like prostaglandin E2, critical for efficient acute inflammatory response and maintenance of epithelium homeostasis. Contributes to membrane phospholipid biosynthesis by providing AA (20:4n-6) as a major acyl chain esterified into phospholipids. In particular, regulates phosphatidylinositol-4,5-bisphosphate levels, modulating inflammatory cytokine production in T-cells. Also desaturates (11E)-octadecenoate (trans-vaccenoate)(18:1n-9), a metabolite in the biohydrogenation pathway of LA (18:2n-6). Does not exhibit any catalytic activity toward 20:3n-6, but it may enhance FADS2 activity. The sequence is that of Acyl-CoA (8-3)-desaturase from Papio anubis (Olive baboon).